The chain runs to 231 residues: Flagellar L-ring protein (231 aa).

An N-terminal signal peptide occupies residues 1–18 (MNRLMIVSLLGIATALGG). C19 carries the N-palmitoyl cysteine lipid modification. C19 is lipidated: S-diacylglycerol cysteine. The tract at residues 118–141 (LSLSAEYGGSRDAKGDSQAGQSNS) is disordered.

Belongs to the FlgH family. The basal body constitutes a major portion of the flagellar organelle and consists of four rings (L,P,S, and M) mounted on a central rod.

Its subcellular location is the cell outer membrane. The protein localises to the bacterial flagellum basal body. In terms of biological role, assembles around the rod to form the L-ring and probably protects the motor/basal body from shearing forces during rotation. The chain is Flagellar L-ring protein from Pseudomonas aeruginosa (strain UCBPP-PA14).